The following is a 210-amino-acid chain: MTRLVLASASAGRLKVLRQAGVDPLVVVSGVDEDAVIAALGPDASPSAVVCALATAKADRVAGALQAGVAADCVVVGCDSMLFIDGGLCGKPGSADAALRQWRRIGGRSGGLYTGHCLLRLRDGDITHREVESACTTVHFASPVEADLRAYVAGGEPLAVAGGFTLDGLGGWFVDGIDGDPSNVIGVSLPLLRTLLTRVGLSVSALWAAD.

The Proton acceptor role is filled by aspartate 79.

It belongs to the Maf family. A divalent metal cation serves as cofactor.

It localises to the cytoplasm. It catalyses the reaction a ribonucleoside 5'-triphosphate + H2O = a ribonucleoside 5'-phosphate + diphosphate + H(+). The enzyme catalyses a 2'-deoxyribonucleoside 5'-triphosphate + H2O = a 2'-deoxyribonucleoside 5'-phosphate + diphosphate + H(+). Its function is as follows. Nucleoside triphosphate pyrophosphatase. May have a dual role in cell division arrest and in preventing the incorporation of modified nucleotides into cellular nucleic acids. The chain is Nucleoside triphosphate pyrophosphatase from Mycolicibacterium paratuberculosis (strain ATCC BAA-968 / K-10) (Mycobacterium paratuberculosis).